Here is a 444-residue protein sequence, read N- to C-terminus: Adenylosuccinate synthetase (444 aa).

GTP contacts are provided by residues 12–18 and 40–42; these read GDEGKGK and GHT. The Proton acceptor role is filled by Asp-13. Residues Asp-13 and Gly-40 each coordinate Mg(2+). Residues 13 to 16, 38 to 41, Thr-128, Arg-142, Gln-223, Thr-238, and Arg-302 contribute to the IMP site; these read DEGK and NAGH. The active-site Proton donor is the His-41. Residue 298–304 participates in substrate binding; the sequence is TTTGRRR. Residues Arg-304, 330–332, and 412–414 each bind GTP; these read KLD and SLG.

Belongs to the adenylosuccinate synthetase family. As to quaternary structure, homodimer. It depends on Mg(2+) as a cofactor.

It is found in the cytoplasm. The catalysed reaction is IMP + L-aspartate + GTP = N(6)-(1,2-dicarboxyethyl)-AMP + GDP + phosphate + 2 H(+). It functions in the pathway purine metabolism; AMP biosynthesis via de novo pathway; AMP from IMP: step 1/2. Plays an important role in the de novo pathway of purine nucleotide biosynthesis. Catalyzes the first committed step in the biosynthesis of AMP from IMP. In Synechococcus elongatus (strain ATCC 33912 / PCC 7942 / FACHB-805) (Anacystis nidulans R2), this protein is Adenylosuccinate synthetase.